Reading from the N-terminus, the 409-residue chain is MTITPLNPTSTQQPDSLGRFGKFGGKYVPETLMPALLQLETACKKYSQDPTFKQELQQLLRDYVGRPSPLYFAERLTAHYTKPDGTGPQIYLKREDLNHTGAHKINNALGQALLAQRMGKQRIIAETGAGQHGVATATVCARFGLKCVIYMGIHDMERQALNVFRMRLMGAEVRPVEAGTGTLKDATSEAIRDWVTNVETTHYILGSVAGPHPYPMMVRDFHAVIGVETRAQCLEKWNGLPDILMACVGGGSNAMGLFHEFINDPSVRMIGVEAAGKGVDTNKHAATLTLGRVGVLHGAMSYLLQDEEGQIIEPHSISAGLDYPGVGPEHSFLKDSGRVEYYSVTDNEAVAAFQRLSQLEGIIPALETAHAIAYLETLCPQLSGSPRIVFNCSGRGDKDVQTVGKFLEG.

Lys104 bears the N6-(pyridoxal phosphate)lysine mark.

The protein belongs to the TrpB family. In terms of assembly, tetramer of two alpha and two beta chains. The cofactor is pyridoxal 5'-phosphate.

The catalysed reaction is (1S,2R)-1-C-(indol-3-yl)glycerol 3-phosphate + L-serine = D-glyceraldehyde 3-phosphate + L-tryptophan + H2O. The protein operates within amino-acid biosynthesis; L-tryptophan biosynthesis; L-tryptophan from chorismate: step 5/5. Functionally, the beta subunit is responsible for the synthesis of L-tryptophan from indole and L-serine. The chain is Tryptophan synthase beta chain from Trichodesmium erythraeum (strain IMS101).